The primary structure comprises 263 residues: 5'-nucleotidase SurE (263 aa).

Positions 15, 16, 46, and 102 each coordinate a divalent metal cation.

It belongs to the SurE nucleotidase family. It depends on a divalent metal cation as a cofactor.

It localises to the cytoplasm. It carries out the reaction a ribonucleoside 5'-phosphate + H2O = a ribonucleoside + phosphate. In terms of biological role, nucleotidase that shows phosphatase activity on nucleoside 5'-monophosphates. The chain is 5'-nucleotidase SurE from Chlorobaculum tepidum (strain ATCC 49652 / DSM 12025 / NBRC 103806 / TLS) (Chlorobium tepidum).